The sequence spans 306 residues: tRNA dimethylallyltransferase (306 aa).

14-21 (GPTAAGKS) is a binding site for ATP. 16 to 21 (TAAGKS) is a substrate binding site. Residues 39–42 (DSRL) are interaction with substrate tRNA.

The protein belongs to the IPP transferase family. As to quaternary structure, monomer. It depends on Mg(2+) as a cofactor.

It carries out the reaction adenosine(37) in tRNA + dimethylallyl diphosphate = N(6)-dimethylallyladenosine(37) in tRNA + diphosphate. In terms of biological role, catalyzes the transfer of a dimethylallyl group onto the adenine at position 37 in tRNAs that read codons beginning with uridine, leading to the formation of N6-(dimethylallyl)adenosine (i(6)A). The polypeptide is tRNA dimethylallyltransferase (Synechococcus elongatus (strain ATCC 33912 / PCC 7942 / FACHB-805) (Anacystis nidulans R2)).